Here is a 396-residue protein sequence, read N- to C-terminus: 1-deoxy-D-xylulose 5-phosphate reductoisomerase (396 aa).

NADPH-binding residues include Thr-13, Gly-14, Ser-15, Ile-16, and Asn-127. Residue Lys-128 coordinates 1-deoxy-D-xylulose 5-phosphate. Position 129 (Glu-129) interacts with NADPH. Asp-153 is a Mn(2+) binding site. 1-deoxy-D-xylulose 5-phosphate-binding residues include Ser-154, Glu-155, Ser-184, and His-207. Position 155 (Glu-155) interacts with Mn(2+). Position 213 (Gly-213) interacts with NADPH. 1-deoxy-D-xylulose 5-phosphate contacts are provided by Ser-220, Asn-225, Lys-226, and Glu-229. Glu-229 serves as a coordination point for Mn(2+).

This sequence belongs to the DXR family. It depends on Mg(2+) as a cofactor. Mn(2+) is required as a cofactor.

It catalyses the reaction 2-C-methyl-D-erythritol 4-phosphate + NADP(+) = 1-deoxy-D-xylulose 5-phosphate + NADPH + H(+). It participates in isoprenoid biosynthesis; isopentenyl diphosphate biosynthesis via DXP pathway; isopentenyl diphosphate from 1-deoxy-D-xylulose 5-phosphate: step 1/6. Its function is as follows. Catalyzes the NADPH-dependent rearrangement and reduction of 1-deoxy-D-xylulose-5-phosphate (DXP) to 2-C-methyl-D-erythritol 4-phosphate (MEP). This chain is 1-deoxy-D-xylulose 5-phosphate reductoisomerase, found in Pseudomonas syringae pv. syringae (strain B728a).